A 267-amino-acid chain; its full sequence is 4-hydroxy-tetrahydrodipicolinate reductase (267 aa).

Residues 8 to 13, E34, 98 to 100, and 122 to 125 contribute to the NAD(+) site; these read GAAGRM, GST, and APNM. The active-site Proton donor/acceptor is H155. H156 contacts (S)-2,3,4,5-tetrahydrodipicolinate. K159 serves as the catalytic Proton donor. (S)-2,3,4,5-tetrahydrodipicolinate is bound at residue 165–166; sequence GT.

Belongs to the DapB family.

The protein resides in the cytoplasm. The enzyme catalyses (S)-2,3,4,5-tetrahydrodipicolinate + NAD(+) + H2O = (2S,4S)-4-hydroxy-2,3,4,5-tetrahydrodipicolinate + NADH + H(+). It carries out the reaction (S)-2,3,4,5-tetrahydrodipicolinate + NADP(+) + H2O = (2S,4S)-4-hydroxy-2,3,4,5-tetrahydrodipicolinate + NADPH + H(+). The protein operates within amino-acid biosynthesis; L-lysine biosynthesis via DAP pathway; (S)-tetrahydrodipicolinate from L-aspartate: step 4/4. In terms of biological role, catalyzes the conversion of 4-hydroxy-tetrahydrodipicolinate (HTPA) to tetrahydrodipicolinate. The polypeptide is 4-hydroxy-tetrahydrodipicolinate reductase (Syntrophotalea carbinolica (strain DSM 2380 / NBRC 103641 / GraBd1) (Pelobacter carbinolicus)).